Consider the following 120-residue polypeptide: Large ribosomal subunit protein bL17 (120 aa).

Belongs to the bacterial ribosomal protein bL17 family. As to quaternary structure, part of the 50S ribosomal subunit. Contacts protein L32.

This chain is Large ribosomal subunit protein bL17, found in Anoxybacillus flavithermus (strain DSM 21510 / WK1).